Here is a 317-residue protein sequence, read N- to C-terminus: Tenomodulin (317 aa).

Residues M1–K30 lie on the Cytoplasmic side of the membrane. The chain crosses the membrane as a helical; Signal-anchor for type II membrane protein span at residues I31 to S50. Residues K51 to V317 are Extracellular-facing. Residues G93–I186 form the BRICHOS domain. An N-linked (GlcNAc...) asparagine glycan is attached at N94. Residues C120 and C178 are joined by a disulfide bond. The N-linked (GlcNAc...) asparagine glycan is linked to N180. Position 239 is a phosphoserine (S239).

This sequence belongs to the chondromodulin-1 family. Highly expressed in tendons.

The protein localises to the membrane. It is found in the nucleus envelope. Its function is as follows. May be an angiogenesis inhibitor. The sequence is that of Tenomodulin (Tnmd) from Rattus norvegicus (Rat).